A 370-amino-acid chain; its full sequence is ADP-ribosylation factor-like protein 13B (370 aa).

Residues cysteine 12, cysteine 13, cysteine 14, and cysteine 15 are each lipidated (S-palmitoyl cysteine). Residues 31–38 (GIGSAGKT), 75–79 (DVGGD), and 134–137 (NNQN) contribute to the GTP site. Residue lysine 239 forms a Glycyl lysine isopeptide (Lys-Gly) (interchain with G-Cter in SUMO) linkage. Residues 255-331 (RNQPPVQPPI…PVSPESNSVK (77 aa)) form a disordered region. Over residues 259–271 (PVQPPIPPDPPSD) the composition is skewed to pro residues. 2 stretches are compositionally biased toward polar residues: residues 287–303 (LASS…TPET) and 314–328 (RISQ…PESN). Lysine 331 is covalently cross-linked (Glycyl lysine isopeptide (Lys-Gly) (interchain with G-Cter in SUMO)). The RVVP region stretch occupies residues 366 to 369 (RVVP).

The protein belongs to the small GTPase superfamily. Arf family. Monomer. Post-translationally, sumoylation regulates the targeting of membrane sensory receptors to the cilium. In terms of tissue distribution, specifically expressed in ciliated sensory neurons throughout development in both hermaphrodites.

It is found in the cell projection. It localises to the cilium membrane. Its function is as follows. Cilium-specific protein required to control the microtubule-based, ciliary axoneme structure. Required for normal sensory cilium function. May act by maintaining the association between IFT subcomplexes A and B. The sequence is that of ADP-ribosylation factor-like protein 13B (arl-13) from Caenorhabditis elegans.